Here is a 223-residue protein sequence, read N- to C-terminus: DNA mismatch repair protein MutH (223 aa).

This sequence belongs to the MutH family.

It is found in the cytoplasm. Sequence-specific endonuclease that cleaves unmethylated GATC sequences. It is involved in DNA mismatch repair. The polypeptide is DNA mismatch repair protein MutH (Haemophilus influenzae (strain PittEE)).